Reading from the N-terminus, the 546-residue chain is MSKDPGRILIFDTTLRDGEQSPGASLNLEEKLAIAHQLARLGVDVIEAGFPFASPGDFKAVNKIANSVGKENGPIICGLARASKGDIKACYEAVSPAPKKRIHTFIATSDIHLKHKLKKSRKDVLQIVPEMVNYAKSLVDDIEFSCEDASRSDPDFLYEVIQLAISAGATTINIPDTVGFTTPNEFGKLISDINKNVPNIDEAVISVHGHNDLGLAVANFLEAVKNGARQLECTINGIGERAGNASLEELVMALHVRKSFFNKFFNRNSDSPTPLTAIRTEEITKTSRLVSNLTGMIVQPNKAIVGANAFAHESGIHQDGVLKNRLTYEIIDAKTVGLSDNKISLGKLSGRSAVRARLEEMGYDLSREDLNDAFARFKDLADRKREITDRDLEAIVSEQVQLPEAKFQLSLVQVSCGNASKPTATISLINTEDNSEDTAVSIGTGPVDAVCEALNKLAKVPNELIEFSVKSVTEGIDALGEVTIRIRRDNKIYSGHSADTDVVVAAANAYVNALNRLVFSEKKSSIHPQFDNLENADKTLLSNPGK.

The Pyruvate carboxyltransferase domain occupies 8–271 (ILIFDTTLRD…NKFFNRNSDS (264 aa)). Residues Asp17, His208, His210, and Asn244 each coordinate Mn(2+). The segment at 408 to 546 (QLSLVQVSCG…DKTLLSNPGK (139 aa)) is regulatory domain.

It belongs to the alpha-IPM synthase/homocitrate synthase family. LeuA type 1 subfamily. Homodimer. It depends on Mn(2+) as a cofactor.

It localises to the cytoplasm. The catalysed reaction is 3-methyl-2-oxobutanoate + acetyl-CoA + H2O = (2S)-2-isopropylmalate + CoA + H(+). Its pathway is amino-acid biosynthesis; L-leucine biosynthesis; L-leucine from 3-methyl-2-oxobutanoate: step 1/4. In terms of biological role, catalyzes the condensation of the acetyl group of acetyl-CoA with 3-methyl-2-oxobutanoate (2-ketoisovalerate) to form 3-carboxy-3-hydroxy-4-methylpentanoate (2-isopropylmalate). The protein is 2-isopropylmalate synthase of Prochlorococcus marinus (strain MIT 9215).